We begin with the raw amino-acid sequence, 165 residues long: Phosphopantetheine adenylyltransferase (165 aa).

Thr10 contacts substrate. ATP-binding positions include 10-11 and His18; that span reads TF. 3 residues coordinate substrate: Lys42, Leu75, and Arg89. ATP-binding positions include 90–92, Glu100, and 125–131; these read GLR and YTYVASS.

It belongs to the bacterial CoaD family. As to quaternary structure, homohexamer. Mg(2+) serves as cofactor.

It is found in the cytoplasm. It catalyses the reaction (R)-4'-phosphopantetheine + ATP + H(+) = 3'-dephospho-CoA + diphosphate. It participates in cofactor biosynthesis; coenzyme A biosynthesis; CoA from (R)-pantothenate: step 4/5. Reversibly transfers an adenylyl group from ATP to 4'-phosphopantetheine, yielding dephospho-CoA (dPCoA) and pyrophosphate. The protein is Phosphopantetheine adenylyltransferase of Chlorobium phaeobacteroides (strain BS1).